We begin with the raw amino-acid sequence, 72 residues long: Translational regulator CsrA (72 aa).

The protein belongs to the CsrA/RsmA family. As to quaternary structure, homodimer; the beta-strands of each monomer intercalate to form a hydrophobic core, while the alpha-helices form wings that extend away from the core.

The protein resides in the cytoplasm. In terms of biological role, a translational regulator that binds mRNA to regulate translation initiation and/or mRNA stability. Usually binds in the 5'-UTR at or near the Shine-Dalgarno sequence preventing ribosome-binding, thus repressing translation. Its main target seems to be the major flagellin gene, while its function is anatagonized by FliW. The polypeptide is Translational regulator CsrA (Lachnoclostridium phytofermentans (strain ATCC 700394 / DSM 18823 / ISDg) (Clostridium phytofermentans)).